Here is a 277-residue protein sequence, read N- to C-terminus: MALKHFKPVTASLRGTVLVDRSELWKGKPVKGLTEGLTSSGGRNNHGRTTVRFRGGGHKRAYRVVDFKRRKFDVAATVERLEYDPNRSAFLALVKYEDGELAYILAPQRLKVGDQVVAGVKVDVKPGNAMPLSAIPVGTIVHNIELKAGAGGKLARSAGTFAQLVGKDQGYAQVKLMSGELRLIRGECMASIGAVSNPDHSNQQLGKAGRKRWLGRRPHNRGVAMNPVDHPLGGGEGRTSGGRNPVTPWGKPTKGAKTRANKRTDGLIIRRRKVGKG.

A disordered region spans residues 216–277 (RRPHNRGVAM…IIRRRKVGKG (62 aa)).

Belongs to the universal ribosomal protein uL2 family. Part of the 50S ribosomal subunit. Forms a bridge to the 30S subunit in the 70S ribosome.

One of the primary rRNA binding proteins. Required for association of the 30S and 50S subunits to form the 70S ribosome, for tRNA binding and peptide bond formation. It has been suggested to have peptidyltransferase activity; this is somewhat controversial. Makes several contacts with the 16S rRNA in the 70S ribosome. In Acidiphilium cryptum (strain JF-5), this protein is Large ribosomal subunit protein uL2.